A 191-amino-acid polypeptide reads, in one-letter code: Protein LURP-one-related 6 (191 aa).

Belongs to the LOR family.

Might be related to the phospholipid scramblase and tubby-like superfamily of membrane tethered transcription factors. This chain is Protein LURP-one-related 6, found in Arabidopsis thaliana (Mouse-ear cress).